Reading from the N-terminus, the 155-residue chain is 3-hydroxyacyl-[acyl-carrier-protein] dehydratase FabZ (155 aa).

His-58 is an active-site residue.

Belongs to the thioester dehydratase family. FabZ subfamily.

It is found in the cytoplasm. It catalyses the reaction a (3R)-hydroxyacyl-[ACP] = a (2E)-enoyl-[ACP] + H2O. Involved in unsaturated fatty acids biosynthesis. Catalyzes the dehydration of short chain beta-hydroxyacyl-ACPs and long chain saturated and unsaturated beta-hydroxyacyl-ACPs. The chain is 3-hydroxyacyl-[acyl-carrier-protein] dehydratase FabZ from Rhizobium etli (strain ATCC 51251 / DSM 11541 / JCM 21823 / NBRC 15573 / CFN 42).